The following is a 137-amino-acid chain: Fluoride-specific ion channel FluC 1 (137 aa).

The next 4 membrane-spanning stretches (helical) occupy residues 3-23 (PLVV…RLVL), 42-62 (INVT…GHGL), 69-89 (ILGT…YEAV), and 107-127 (MMFL…LAVA). Positions 76 and 79 each coordinate Na(+).

Belongs to the fluoride channel Fluc/FEX (TC 1.A.43) family.

It localises to the cell membrane. It carries out the reaction fluoride(in) = fluoride(out). Na(+) is not transported, but it plays an essential structural role and its presence is essential for fluoride channel function. In terms of biological role, fluoride-specific ion channel. Important for reducing fluoride concentration in the cell, thus reducing its toxicity. This chain is Fluoride-specific ion channel FluC 1, found in Leifsonia xyli subsp. xyli (strain CTCB07).